The primary structure comprises 361 residues: MIIEEAQAINSFFRSESSKEVYGLIWLLVPILTLVLGITIGVLVIVWLERKISAGIQRRIGPEYAGPLGILQALADGVKLLFKEDLLPSRGDIRLFSVGPSVAVVSILLSYSVIPFGYHLVLTDLSIGVFLWIAISSIAPIGLLMSGYGSNNKYSFSGGLRAAAQSISYEIPLTPCVLSISLLSNSSSTVDIVEAQSKYGFWGWNLWRQPIGFLVFIISSLAECERLPFDLPEAEEELVAGYQTEYSGIKFGLFYVASYLNLLVSSLFVTVLYLGGWNLPIPYIPITELFEINKTSEVFGTTISLLITLAKAYLFLFIPISTRWTLPRLRMDQLLNLGWKSLLPIALGNLLLTTSSQLVSL.

Transmembrane regions (helical) follow at residues 25–45 (IWLLVPILTLVLGITIGVLVI), 102–122 (VAVVSILLSYSVIPFGYHLVL), 125–145 (LSIGVFLWIAISSIAPIGLLM), 246–266 (YSGIKFGLFYVASYLNLLVSS), 298–318 (VFGTTISLLITLAKAYLFLFI), and 334–354 (LLNLGWKSLLPIALGNLLLTT).

It belongs to the complex I subunit 1 family. NDH is composed of at least 16 different subunits, 5 of which are encoded in the nucleus.

The protein resides in the plastid. It is found in the chloroplast thylakoid membrane. It catalyses the reaction a plastoquinone + NADH + (n+1) H(+)(in) = a plastoquinol + NAD(+) + n H(+)(out). The enzyme catalyses a plastoquinone + NADPH + (n+1) H(+)(in) = a plastoquinol + NADP(+) + n H(+)(out). Its function is as follows. NDH shuttles electrons from NAD(P)H:plastoquinone, via FMN and iron-sulfur (Fe-S) centers, to quinones in the photosynthetic chain and possibly in a chloroplast respiratory chain. The immediate electron acceptor for the enzyme in this species is believed to be plastoquinone. Couples the redox reaction to proton translocation, and thus conserves the redox energy in a proton gradient. The polypeptide is NAD(P)H-quinone oxidoreductase subunit 1, chloroplastic (Nymphaea alba (White water-lily)).